We begin with the raw amino-acid sequence, 328 residues long: DNA-directed RNA polymerase subunit alpha (328 aa).

The interval 1 to 231 (MIQQMQMPEK…DHVRLFSLFS (231 aa)) is alpha N-terminal domain (alpha-NTD). The interval 252-328 (MRKLLMTRIE…MEVTKYRLNQ (77 aa)) is alpha C-terminal domain (alpha-CTD).

This sequence belongs to the RNA polymerase alpha chain family. As to quaternary structure, homodimer. The RNAP catalytic core consists of 2 alpha, 1 beta, 1 beta' and 1 omega subunit. When a sigma factor is associated with the core the holoenzyme is formed, which can initiate transcription.

The enzyme catalyses RNA(n) + a ribonucleoside 5'-triphosphate = RNA(n+1) + diphosphate. Functionally, DNA-dependent RNA polymerase catalyzes the transcription of DNA into RNA using the four ribonucleoside triphosphates as substrates. The protein is DNA-directed RNA polymerase subunit alpha of Chloroherpeton thalassium (strain ATCC 35110 / GB-78).